The primary structure comprises 480 residues: ATP synthase subunit beta (480 aa).

153-160 lines the ATP pocket; it reads GGAGVGKT.

The protein belongs to the ATPase alpha/beta chains family. As to quaternary structure, F-type ATPases have 2 components, CF(1) - the catalytic core - and CF(0) - the membrane proton channel. CF(1) has five subunits: alpha(3), beta(3), gamma(1), delta(1), epsilon(1). CF(0) has three main subunits: a(1), b(2) and c(9-12). The alpha and beta chains form an alternating ring which encloses part of the gamma chain. CF(1) is attached to CF(0) by a central stalk formed by the gamma and epsilon chains, while a peripheral stalk is formed by the delta and b chains.

The protein localises to the cell membrane. The enzyme catalyses ATP + H2O + 4 H(+)(in) = ADP + phosphate + 5 H(+)(out). In terms of biological role, produces ATP from ADP in the presence of a proton gradient across the membrane. The catalytic sites are hosted primarily by the beta subunits. This is ATP synthase subunit beta from Lactobacillus johnsonii (strain CNCM I-12250 / La1 / NCC 533).